A 62-amino-acid chain; its full sequence is Small ribosomal subunit protein eS27 (62 aa).

4 residues coordinate Zn(2+): cysteine 17, cysteine 20, cysteine 36, and cysteine 39. The C4-type zinc-finger motif lies at 17–39 (CPECNNEQIVFGSPATVVKCLTC).

The protein belongs to the eukaryotic ribosomal protein eS27 family. Part of the 30S ribosomal subunit. Requires Zn(2+) as cofactor.

The chain is Small ribosomal subunit protein eS27 from Methanocaldococcus jannaschii (strain ATCC 43067 / DSM 2661 / JAL-1 / JCM 10045 / NBRC 100440) (Methanococcus jannaschii).